The following is a 222-amino-acid chain: Sugar fermentation stimulation protein homolog (222 aa).

Belongs to the SfsA family.

The polypeptide is Sugar fermentation stimulation protein homolog (Thermoplasma acidophilum (strain ATCC 25905 / DSM 1728 / JCM 9062 / NBRC 15155 / AMRC-C165)).